The following is a 555-amino-acid chain: Urocanate hydratase (555 aa).

Residues 51 to 52 (GG), Q129, 175 to 177 (GMG), E195, 262 to 266 (QTSAH), 272 to 273 (YL), and Y321 each bind NAD(+). The active site involves C409. Residue G491 coordinates NAD(+).

This sequence belongs to the urocanase family. Requires NAD(+) as cofactor.

It is found in the cytoplasm. The enzyme catalyses 4-imidazolone-5-propanoate = trans-urocanate + H2O. Its pathway is amino-acid degradation; L-histidine degradation into L-glutamate; N-formimidoyl-L-glutamate from L-histidine: step 2/3. Functionally, catalyzes the conversion of urocanate to 4-imidazolone-5-propionate. The sequence is that of Urocanate hydratase from Xanthomonas axonopodis pv. citri (strain 306).